The sequence spans 485 residues: MKGRRRRRREYCKFTLLLALYTLLLLLVPSVLDSGSEQDKGGRDCPGLQRSLGVWSLEAAAAGEREQGAEVRFQAEGNPDRSPRPQGNLSAIRESVTQEKQHIYVHATWRTGSSFLGELFNQHPDVFYLYEPMWHLWQALYPGNAESLQGALRDMLRSLFRCDFSVLRLYAQPGDPAERAPDSANLTTAMLFRWRTNKVICSPPLCPAAPRARADVGLVEDKACESTCPPVPLRALEAECRKYPVVVIKDVRLLDLGVLVPLLRDPGLNLKVVQLFRDPRAVHNSRLKSRHGLLRESIQVLRTRQRGDRFQRVLLAHGVGARPGGQSRALPSAPRADFFLTSALEVICEAWLRDLLFTRGAPTWLRRRYLRLRYEDLVWQPQVQLRRLLRFSGLRTLAALDAFAFNMTRGSAYGADRPFHLSARDAREAVHAWRERLSQEQVRQVEAACDPAMRLLAYPRSGDERDVKTVRKGETPLETNANWAT.

At 1 to 12 (MKGRRRRRREYC) the chain is on the cytoplasmic side. A helical; Signal-anchor for type II membrane protein transmembrane segment spans residues 13-33 (KFTLLLALYTLLLLLVPSVLD). Topologically, residues 34–485 (SGSEQDKGGR…PLETNANWAT (452 aa)) are lumenal. The disordered stretch occupies residues 66-88 (EQGAEVRFQAEGNPDRSPRPQGN). Asn-88 carries an N-linked (GlcNAc...) asparagine glycan. 109 to 115 (WRTGSSF) is a 3'-phosphoadenylyl sulfate binding site. The N-linked (GlcNAc...) asparagine glycan is linked to Asn-185. 277-285 (RDPRAVHNS) contacts 3'-phosphoadenylyl sulfate. The N-linked (GlcNAc...) asparagine glycan is linked to Asn-406. Ser-461 carries the post-translational modification Phosphoserine. Positions 465-475 (RDVKTVRKGET) are enriched in basic and acidic residues. The tract at residues 465–485 (RDVKTVRKGETPLETNANWAT) is disordered.

Belongs to the sulfotransferase 1 family. Gal/GlcNAc/GalNAc subfamily.

It localises to the golgi apparatus membrane. The catalysed reaction is chondroitin beta-D-glucuronate + n 3'-phosphoadenylyl sulfate = chondroitin 6'-sulfate + n adenosine 3',5'-bisphosphate + n H(+). Functionally, sulfotransferase that utilizes 3'-phospho-5'-adenylyl sulfate (PAPS) as sulfonate donor to catalyze the transfer of sulfate to position 6 of non-reducing N-acetylglucosamine (GlcNAc) residues. Preferentially acts on mannose-linked GlcNAc. Also able to catalyze the transfer of sulfate to position 6 of the N-acetylgalactosamine (GalNAc) residue of chondroitin. Also acts on core 2 mucin-type oligosaccharide and N-acetyllactosamine oligomer with a lower efficiency. Has weak or no activity toward keratan sulfate and oligosaccharides containing the Galbeta1-4GlcNAc. Catalyzes 6-O-sulfation of beta-benzyl GlcNAc but not alpha- or beta-benzyl GalNAc. This is Carbohydrate sulfotransferase 7 (Chst7) from Rattus norvegicus (Rat).